The sequence spans 113 residues: Ig heavy chain V-III region ABE-47N (113 aa).

Residues 1 to 113 (EVKLEESGGG…YWGQGTLVTV (113 aa)) form the Ig-like domain. An intrachain disulfide couples Cys-22 to Cys-98.

The polypeptide is Ig heavy chain V-III region ABE-47N (Mus musculus (Mouse)).